A 500-amino-acid polypeptide reads, in one-letter code: Cytochrome P450 11B2, mitochondrial (500 aa).

A mitochondrion-targeting transit peptide spans 1 to 24 (MALRVTADVWLARPWQCLHRTRAL). F381 contributes to the 21-hydroxyprogesterone binding site. C447 contributes to the heme binding site.

It belongs to the cytochrome P450 family. The cofactor is heme.

It is found in the mitochondrion inner membrane. It catalyses the reaction a steroid + 2 reduced [adrenodoxin] + O2 + 2 H(+) = an 11beta-hydroxysteroid + 2 oxidized [adrenodoxin] + H2O. It carries out the reaction 21-hydroxyprogesterone + 2 reduced [adrenodoxin] + O2 + 2 H(+) = corticosterone + 2 oxidized [adrenodoxin] + H2O. The catalysed reaction is corticosterone + 2 reduced [adrenodoxin] + O2 + 2 H(+) = 18-hydroxycorticosterone + 2 oxidized [adrenodoxin] + H2O. The enzyme catalyses 18-hydroxycorticosterone + 2 reduced [adrenodoxin] + O2 + 2 H(+) = aldosterone + 2 oxidized [adrenodoxin] + 2 H2O. It catalyses the reaction 11-deoxycortisol + 2 reduced [adrenodoxin] + O2 + 2 H(+) = cortisol + 2 oxidized [adrenodoxin] + H2O. It carries out the reaction 21-hydroxyprogesterone + 2 reduced [adrenodoxin] + O2 + 2 H(+) = 18-hydroxy-11-deoxycorticosterone + 2 oxidized [adrenodoxin] + H2O. The catalysed reaction is cortisol + 2 reduced [adrenodoxin] + O2 + 2 H(+) = 18-hydroxycortisol + 2 oxidized [adrenodoxin] + H2O. The enzyme catalyses 18-hydroxycortisol + 2 reduced [adrenodoxin] + O2 + 2 H(+) = 18-oxocortisol + 2 oxidized [adrenodoxin] + 2 H2O. Its pathway is steroid biosynthesis. A cytochrome P450 monooxygenase that catalyzes the biosynthesis of aldosterone, the main mineralocorticoid in the human body responsible for salt and water homeostasis, thus involved in blood pressure regulation, arterial hypertension, and the development of heart failure. Catalyzes three sequential oxidative reactions of 11-deoxycorticosterone (21-hydroxyprogesterone), namely 11-beta hydroxylation, followed by two successive oxidations at C18 yielding 18-hydroxy and then 18-oxo intermediates (that would not leave the enzyme active site during the consecutive hydroxylation reactions), ending with the formation of aldosterone. Can also produce 18-hydroxycortisol and 18-oxocortisol, derived from successive oxidations of cortisol at C18, normally found at very low levels, but significantly increased in primary aldosteronism, the most common form of secondary hypertension. Mechanistically, uses molecular oxygen inserting one oxygen atom into a substrate and reducing the second into a water molecule. Two electrons are provided by NADPH via a two-protein mitochondrial transfer system comprising flavoprotein FDXR (adrenodoxin/ferredoxin reductase) and nonheme iron-sulfur protein FDX1 or FDX2 (adrenodoxin/ferredoxin). Could also be involved in the androgen metabolic pathway. This Mus musculus (Mouse) protein is Cytochrome P450 11B2, mitochondrial (Cyp11b2).